A 228-amino-acid polypeptide reads, in one-letter code: Urease accessory protein UreF (228 aa).

The protein belongs to the UreF family. UreD, UreF and UreG form a complex that acts as a GTP-hydrolysis-dependent molecular chaperone, activating the urease apoprotein by helping to assemble the nickel containing metallocenter of UreC. The UreE protein probably delivers the nickel.

The protein localises to the cytoplasm. Required for maturation of urease via the functional incorporation of the urease nickel metallocenter. This is Urease accessory protein UreF from Yersinia enterocolitica serotype O:8 / biotype 1B (strain NCTC 13174 / 8081).